The following is an 82-amino-acid chain: Probable glutamyl-tRNA(Gln) amidotransferase subunit C (82 aa).

It belongs to the GatC family. Heterotrimer of A, B and C subunits.

The enzyme catalyses L-glutamyl-tRNA(Gln) + L-glutamine + ATP + H2O = L-glutaminyl-tRNA(Gln) + L-glutamate + ADP + phosphate + H(+). The catalysed reaction is L-aspartyl-tRNA(Asn) + L-glutamine + ATP + H2O = L-asparaginyl-tRNA(Asn) + L-glutamate + ADP + phosphate + 2 H(+). In terms of biological role, allows the formation of correctly charged Asn-tRNA(Asn) or Gln-tRNA(Gln) through the transamidation of misacylated Asp-tRNA(Asn) or Glu-tRNA(Gln) in organisms which lack either or both of asparaginyl-tRNA or glutaminyl-tRNA synthetases. The reaction takes place in the presence of glutamine and ATP through an activated phospho-Asp-tRNA(Asn) or phospho-Glu-tRNA(Gln). The protein is Probable glutamyl-tRNA(Gln) amidotransferase subunit C of Methanocaldococcus jannaschii (strain ATCC 43067 / DSM 2661 / JAL-1 / JCM 10045 / NBRC 100440) (Methanococcus jannaschii).